We begin with the raw amino-acid sequence, 267 residues long: U6 snRNA phosphodiesterase 1 (267 aa).

A disordered region spans residues 1–72 (MNAAPLVGYS…EDDSARHGGR (72 aa)). The active-site Proton acceptor is His-122. 122 to 124 (HLS) contacts AMP. UMP-binding positions include Gln-166, Tyr-204, and 208–212 (SFHVS). AMP-binding positions include Tyr-204 and 206–212 (DPSFHVS). Residue His-210 is the Proton donor of the active site.

This sequence belongs to the 2H phosphoesterase superfamily. USB1 family. In terms of assembly, interacts with PLRG1, CDC5L and PRPF19.

It is found in the nucleus. The enzyme catalyses a 3'-end uridylyl-uridine-RNA = a 3'-end 2',3'-cyclophospho-uridine-RNA + uridine. It carries out the reaction a 3'-end uridylyl-adenosine-RNA = a 3'-end 2',3'-cyclophospho-uridine-RNA + adenosine. In terms of biological role, 3'-5' RNA exonuclease that trims the 3' end of oligo(U) and oligo(A) tracts of the pre-U6 small nuclear RNA (snRNA) molecule, leading to the formation of a mature U6 snRNA 3' end-terminated with a 2',3'-cyclic phosphate. Participates in the U6 snRNA 3' end processing that prevents U6 snRNA degradation. In addition also removes uridines from the 3' end of U6atac snRNA and possibly the vault RNA VTRNA1-1. The protein is U6 snRNA phosphodiesterase 1 of Rattus norvegicus (Rat).